A 370-amino-acid polypeptide reads, in one-letter code: 3-dehydroquinate synthase (370 aa).

Residues 112-116, 136-137, Lys149, Lys158, and 176-179 contribute to the NAD(+) site; these read GVVGD, TS, and TLRT. Positions 191, 254, and 276 each coordinate Zn(2+).

Belongs to the sugar phosphate cyclases superfamily. Dehydroquinate synthase family. NAD(+) is required as a cofactor. Requires Co(2+) as cofactor. It depends on Zn(2+) as a cofactor.

The protein localises to the cytoplasm. It carries out the reaction 7-phospho-2-dehydro-3-deoxy-D-arabino-heptonate = 3-dehydroquinate + phosphate. It participates in metabolic intermediate biosynthesis; chorismate biosynthesis; chorismate from D-erythrose 4-phosphate and phosphoenolpyruvate: step 2/7. Functionally, catalyzes the conversion of 3-deoxy-D-arabino-heptulosonate 7-phosphate (DAHP) to dehydroquinate (DHQ). In Xanthomonas axonopodis pv. citri (strain 306), this protein is 3-dehydroquinate synthase.